The chain runs to 562 residues: Oligo-1,6-glucosidase (562 aa).

Ca(2+) contacts are provided by Asp21, Asn23, Asp25, and Asp29. Asp199 serves as the catalytic Nucleophile. The Proton donor role is filled by Glu256.

Belongs to the glycosyl hydrolase 13 family.

It is found in the cytoplasm. It catalyses the reaction Hydrolysis of (1-&gt;6)-alpha-D-glucosidic linkages in some oligosaccharides produced from starch and glycogen by alpha-amylase, and in isomaltose.. The polypeptide is Oligo-1,6-glucosidase (malL) (Parageobacillus thermoglucosidasius (Geobacillus thermoglucosidasius)).